A 547-amino-acid chain; its full sequence is Phosphomethylpyrimidine synthase (547 aa).

Residues N146, M175, Y204, H240, 260–262 (SRG), 301–304 (DGLR), and E340 contribute to the substrate site. Residue H344 coordinates Zn(2+). Y367 contributes to the substrate binding site. Position 408 (H408) interacts with Zn(2+). [4Fe-4S] cluster is bound by residues C488, C491, and C496.

It belongs to the ThiC family. The cofactor is [4Fe-4S] cluster.

It catalyses the reaction 5-amino-1-(5-phospho-beta-D-ribosyl)imidazole + S-adenosyl-L-methionine = 4-amino-2-methyl-5-(phosphooxymethyl)pyrimidine + CO + 5'-deoxyadenosine + formate + L-methionine + 3 H(+). It participates in cofactor biosynthesis; thiamine diphosphate biosynthesis. In terms of biological role, catalyzes the synthesis of the hydroxymethylpyrimidine phosphate (HMP-P) moiety of thiamine from aminoimidazole ribotide (AIR) in a radical S-adenosyl-L-methionine (SAM)-dependent reaction. The polypeptide is Phosphomethylpyrimidine synthase (Mycobacterium bovis (strain ATCC BAA-935 / AF2122/97)).